We begin with the raw amino-acid sequence, 2009 residues long: ADP-ribosylation factor guanine nucleotide-exchange factor SEC7 (2009 aa).

The interval 1–220 (MSEQNSVVNA…ISLSSNGSNT (220 aa)) is disordered. Residues 17 to 33 (ISSNVETASSVNPSVKP) show a composition bias toward polar residues. The span at 37–53 (IKEEAKETNGEDQKCKG) shows a compositional bias: basic and acidic residues. The segment covering 91 to 118 (EGEDGDEDEDEDEDEDEDNGDEDDEDVD) has biased composition (acidic residues). A compositionally biased stretch (low complexity) spans 134-143 (SVSGESTESS). Residues 144 to 154 (SGEDEESDESD) are compositionally biased toward acidic residues. Residues 155 to 165 (GNTSNSSSGDE) are compositionally biased toward low complexity. Positions 166–184 (SGSEEEEEEEEEEEEEENA) are enriched in acidic residues. Over residues 194-209 (SVPTNDSTAPRSTHTR) the composition is skewed to polar residues. Over residues 210-220 (NISLSSNGSNT) the composition is skewed to low complexity. Phosphoserine is present on residues Ser-212 and Ser-215. Phosphothreonine is present on Thr-334. Phosphoserine occurs at positions 447, 452, and 455. The short motif at 653 to 657 (NYDCN) is the HUS box element. A compositionally biased stretch (low complexity) spans 771–788 (SSARQESRSSLSNDVRSS). Positions 771 to 814 (SSARQESRSSLSNDVRSSIMTSNDDFKPTYEDEESRSLSSQNID) are disordered. A Glycyl lysine isopeptide (Lys-Gly) (interchain with G-Cter in ubiquitin) cross-link involves residue Lys-797. The residue at position 807 (Ser-807) is a Phosphoserine. Residues 824–1010 (LKLRKTALSE…LFNEIANNEI (187 aa)) form the SEC7 domain. Asp-940 provides a ligand contact to Mg(2+). The HDS1 domain stretch occupies residues 1017 to 1220 (HQAMLSGDTN…QARVANPRVS (204 aa)). At Ser-1226 the chain carries Phosphoserine. Position 1240 is a phosphothreonine (Thr-1240). Positions 1708-1723 (GRKSSVSHHQTTNDTS) are enriched in polar residues. The interval 1708–1803 (GRKSSVSHHQ…KKTKHMKRNE (96 aa)) is disordered. Over residues 1724–1751 (QHSDDDSNDRRENDSNISETVERAHQEE) the composition is skewed to basic and acidic residues. Residues Ser-1741 and Ser-1752 each carry the phosphoserine modification. Residues 1764-1777 (LNGQTKLNNGNSVP) are compositionally biased toward polar residues. The tract at residues 1836–1883 (FENEDFAHCIPYKEAIRITRLLEKSYEFSRDFNEDYGLRTRLVEARVV) is C2 domain-interacting region (CIR).

Interacts with ARF1. Interacts (via C-terminus) with RSP5 ubiquitin ligase.

Its subcellular location is the cytoplasm. It localises to the golgi apparatus. The protein localises to the trans-Golgi network. The protein resides in the cytoplasmic vesicle. It is found in the COPI-coated vesicle membrane. Its subcellular location is the COPII-coated vesicle membrane. Functionally, guanine exchange factor that acts as an activator of ARF1 at the trans-Golgi network and is thus involved in vesicular budding and traffic between compartments of the Golgi apparatus. Activation of Arf (ADP-ribosylation factor) GTPases is essential for vesicle formation via recruitment of cargo adapters and coat proteins necessary for Golgi trafficking. Also plays an essential role in ER-to-Golgi traffic. SEC7 also acts as an effector of two Rab GTPases, YPT1 and YPT31/32. This Saccharomyces cerevisiae (strain ATCC 204508 / S288c) (Baker's yeast) protein is ADP-ribosylation factor guanine nucleotide-exchange factor SEC7.